The sequence spans 355 residues: Vacuolar protein sorting-associated protein 37C (355 aa).

Ser29 bears the Phosphoserine mark. A VPS37 C-terminal domain is found at 78–167 (VERCQEQKAK…RKPRASQELA (90 aa)). The tract at residues 159 to 355 (KPRASQELAG…PPPGPAWPGY (197 aa)) is disordered. Pro residues-rich tracts occupy residues 170 to 186 (APPPRPPPPVRPVPQGT) and 194 to 205 (PQPPSAMPPYPL). Positions 246–257 (PAAQPGPRGAAG) are enriched in low complexity. Positions 321 to 355 (PGQPQPSVPLQPPYPPGPAPPYGFPPPPGPAWPGY) are enriched in pro residues.

This sequence belongs to the VPS37 family. Component of the ESCRT-I complex (endosomal sorting complex required for transport I) which consists of TSG101, VPS28, a VPS37 protein (VPS37A to -D) and MVB12A or MVB12B in a 1:1:1:1 stoichiometry. Interacts with TSG101, VPS28, MVB12A and MVB12B. Component of the ESCRT-I complex (endosomal sorting complex required for transport I) which consists of TSG101, VPS28, a VPS37 protein (VPS37A to -D) and UBAP1 in a 1:1:1:1 stoichiometry. Interacts with HGS and STAM2. Interacts with CEP55. Post-translationally, phosphorylated by TBK1.

The protein localises to the late endosome membrane. Component of the ESCRT-I complex, a regulator of vesicular trafficking process. Required for the sorting of endocytic ubiquitinated cargos into multivesicular bodies. May be involved in cell growth and differentiation. This chain is Vacuolar protein sorting-associated protein 37C (VPS37C), found in Pongo abelii (Sumatran orangutan).